The primary structure comprises 73 residues: Large ribosomal subunit protein bL31 (73 aa).

This sequence belongs to the bacterial ribosomal protein bL31 family. Type A subfamily. Part of the 50S ribosomal subunit.

In terms of biological role, binds the 23S rRNA. This Agrobacterium fabrum (strain C58 / ATCC 33970) (Agrobacterium tumefaciens (strain C58)) protein is Large ribosomal subunit protein bL31.